Consider the following 63-residue polypeptide: Large ribosomal subunit protein uL29 (63 aa).

Belongs to the universal ribosomal protein uL29 family.

The chain is Large ribosomal subunit protein uL29 from Sodalis glossinidius (strain morsitans).